Consider the following 204-residue polypeptide: High frequency lysogenization protein HflD homolog (204 aa).

This sequence belongs to the HflD family.

It localises to the cytoplasm. The protein resides in the cell inner membrane. This chain is High frequency lysogenization protein HflD homolog, found in Stenotrophomonas maltophilia (strain K279a).